Consider the following 65-residue polypeptide: Hirudin-2B (65 aa).

Residues 1-3 (ITY) form an interaction with thrombin active site region. Intrachain disulfides connect Cys6-Cys14, Cys16-Cys28, and Cys22-Cys39. The tract at residues 39–65 (CVTGEGTPKPQSHNDGDFEEIPEEYLQ) is disordered. Thr45 carries an O-linked (GalNAc...) threonine glycan. Residues 55 to 65 (DFEEIPEEYLQ) are interaction with fibrinogen-binding exosite of thrombin. The segment covering 55 to 65 (DFEEIPEEYLQ) has biased composition (acidic residues). The residue at position 63 (Tyr63) is a Sulfotyrosine.

Belongs to the protease inhibitor I14 (hirudin) family.

It localises to the secreted. In terms of biological role, hirudin is a potent thrombin-specific protease inhibitor. It forms a stable non-covalent complex with alpha-thrombin, thereby abolishing its ability to cleave fibrinogen. This Hirudo medicinalis (Medicinal leech) protein is Hirudin-2B.